The primary structure comprises 277 residues: Large ribosomal subunit protein uL2 (277 aa).

Residues 222–277 are disordered; that stretch reads GSVMNPNDHPHGGGEGKAPVGRKAPSTPWGKPALGLKTRNKKAKSDKLIVRRRNEK. Residues 264–277 are compositionally biased toward basic and acidic residues; that stretch reads AKSDKLIVRRRNEK.

The protein belongs to the universal ribosomal protein uL2 family. As to quaternary structure, part of the 50S ribosomal subunit. Forms a bridge to the 30S subunit in the 70S ribosome.

Its function is as follows. One of the primary rRNA binding proteins. Required for association of the 30S and 50S subunits to form the 70S ribosome, for tRNA binding and peptide bond formation. It has been suggested to have peptidyltransferase activity; this is somewhat controversial. Makes several contacts with the 16S rRNA in the 70S ribosome. In Streptococcus thermophilus (strain CNRZ 1066), this protein is Large ribosomal subunit protein uL2.